A 129-amino-acid chain; its full sequence is Capsid protein (129 aa).

The interval 31–104 (EWISSNSRSQ…FATNSDCELI (74 aa)) is viral RNA-binding.

This sequence belongs to the Leviviricetes capsid protein family. In terms of assembly, homodimer. The capsid proteins form dimers that assemble by group of 5. Twelve such pentamers are linked together with free dimers. The homodimers binds to the viral RNA via an operator hairpin, but also to many other RNA sequences in the viral genome; this interaction probably shifts the virus from the replicative to the assembly phase and ensures specific encapsidation of the viral genome.

It localises to the virion. Its function is as follows. Capsid protein self-assembles to form an icosahedral capsid with a T=3 symmetry, about 26 nm in diameter, and consisting of 89 capsid proteins dimers (178 capsid proteins). Involved in viral genome encapsidation through the interaction between a capsid protein dimer and the multiple packaging signals present in the RNA genome. The capsid also contains 1 copy of the A2 maturation protein. Acts as a translational repressor of viral replicase synthesis late in infection. This latter function is the result of capsid protein interaction with an RNA hairpin which contains the replicase ribosome-binding site. The protein is Capsid protein of Enterobacteria phage f2 (Bacteriophage f2).